The primary structure comprises 146 residues: uncharacterized protein (146 aa).

This is an uncharacterized protein from Aquifex aeolicus (strain VF5).